The following is a 501-amino-acid chain: Cytochrome P450 2J6 (501 aa).

A heme-binding site is contributed by Cys447.

This sequence belongs to the cytochrome P450 family. It depends on heme as a cofactor.

The protein resides in the endoplasmic reticulum membrane. The protein localises to the microsome membrane. The enzyme catalyses an organic molecule + reduced [NADPH--hemoprotein reductase] + O2 = an alcohol + oxidized [NADPH--hemoprotein reductase] + H2O + H(+). The protein is Cytochrome P450 2J6 (Cyp2j6) of Mus musculus (Mouse).